The following is a 121-amino-acid chain: MKMNSKQPRKQRKFLYNAPLHVRQKMMSAPLSKELREKYKVRNLPVRVGDKVRIMRGDFKGYEGKVVEVDLKRYRIYVEGVTLRKVNGTEVFYPIHPSNVMIIELNLDDEKRKKIIERRAG.

Belongs to the universal ribosomal protein uL24 family. As to quaternary structure, part of the 50S ribosomal subunit.

One of two assembly initiator proteins, it binds directly to the 5'-end of the 23S rRNA, where it nucleates assembly of the 50S subunit. Its function is as follows. Located at the polypeptide exit tunnel on the outside of the subunit. This Pyrococcus horikoshii (strain ATCC 700860 / DSM 12428 / JCM 9974 / NBRC 100139 / OT-3) protein is Large ribosomal subunit protein uL24.